The primary structure comprises 469 residues: MAKTLYQKLYDAHIVREVPNETPLLYIDRHLVHEVTSPQAFDGLRTKGRPVHQPGKTFATMDHNVSTQTKDINACGDMARIQMQELMKNCAEFGITLYDLNHPYQGIVHVIGPEQGITLPGMTIVCGDSHTATHGAFGSLAFGIGTSEVEHVLASQTLKQARAKTMKIEVMGDVGDAITAKDIVLAIIGKTGSAGGTGYVVEFCGKAIEALSMEGRMTLCNMAIEMGAKAGLVAPDETTFTYMKGRQFSPKGELWEQAVAYWKTLKSDPDAQYDTIVTINAEEISPQVTWGTNPGQVIAIDQTIPAPESFSDPVERASAEKALAYMDLKPGIKLTDVKIDKVFIGSCTNSRIEDLRAAAAIAQGHKVAPGVQAIVVPGSGPVQAQAEAEGLDKIFIEAGFEWRLPGCSMCLAMNNDRLQPGERCASTSNRNFEGRQGRGGRTHLVSPAMAAAAAINGHFIDIRHPAQKS.

Residues Cys-347, Cys-407, and Cys-410 each coordinate [4Fe-4S] cluster.

The protein belongs to the aconitase/IPM isomerase family. LeuC type 1 subfamily. As to quaternary structure, heterodimer of LeuC and LeuD. Requires [4Fe-4S] cluster as cofactor.

The catalysed reaction is (2R,3S)-3-isopropylmalate = (2S)-2-isopropylmalate. It functions in the pathway amino-acid biosynthesis; L-leucine biosynthesis; L-leucine from 3-methyl-2-oxobutanoate: step 2/4. Its function is as follows. Catalyzes the isomerization between 2-isopropylmalate and 3-isopropylmalate, via the formation of 2-isopropylmaleate. In Photorhabdus laumondii subsp. laumondii (strain DSM 15139 / CIP 105565 / TT01) (Photorhabdus luminescens subsp. laumondii), this protein is 3-isopropylmalate dehydratase large subunit.